The primary structure comprises 514 residues: ATP synthase subunit alpha (514 aa).

ATP is bound at residue 170–177 (GDRQIGKS).

The protein belongs to the ATPase alpha/beta chains family. As to quaternary structure, F-type ATPases have 2 components, CF(1) - the catalytic core - and CF(0) - the membrane proton channel. CF(1) has five subunits: alpha(3), beta(3), gamma(1), delta(1), epsilon(1). CF(0) has three main subunits: a(1), b(2) and c(9-12). The alpha and beta chains form an alternating ring which encloses part of the gamma chain. CF(1) is attached to CF(0) by a central stalk formed by the gamma and epsilon chains, while a peripheral stalk is formed by the delta and b chains.

It localises to the cell inner membrane. The catalysed reaction is ATP + H2O + 4 H(+)(in) = ADP + phosphate + 5 H(+)(out). Functionally, produces ATP from ADP in the presence of a proton gradient across the membrane. The alpha chain is a regulatory subunit. The chain is ATP synthase subunit alpha from Chromohalobacter salexigens (strain ATCC BAA-138 / DSM 3043 / CIP 106854 / NCIMB 13768 / 1H11).